Consider the following 239-residue polypeptide: Sugar fermentation stimulation protein homolog (239 aa).

Belongs to the SfsA family.

The chain is Sugar fermentation stimulation protein homolog from Rhizobium meliloti (strain 1021) (Ensifer meliloti).